A 562-amino-acid chain; its full sequence is Phosphoglucomutase-1 (562 aa).

Met-1 bears the N-acetylmethionine mark. Position 16 is an N6-acetyllysine (Lys-16). Arg-23 is a binding site for alpha-D-glucose 1,6-bisphosphate. Thr-115 carries the phosphothreonine modification. Position 117 (Ser-117) interacts with alpha-D-glucose 1,6-bisphosphate. The active-site Phosphoserine intermediate is the Ser-117. Ser-117 is a binding site for Mg(2+). Residues Ser-117 and Ser-134 each carry the phosphoserine modification. Thr-185 carries the phosphothreonine modification. Phosphoserine occurs at positions 201, 206, and 213. Asp-288, Asp-290, and Asp-292 together coordinate Mg(2+). Alpha-D-glucose 1,6-bisphosphate-binding residues include Asp-292 and Arg-293. N6-acetyllysine is present on Lys-349. Phosphotyrosine is present on Tyr-353. Thr-357 contacts alpha-D-glucose 1,6-bisphosphate. A Phosphoserine modification is found at Ser-369. Positions 376, 378, and 389 each coordinate alpha-D-glucose 1,6-bisphosphate. Phosphoserine is present on Ser-378. Lys-419 carries the post-translational modification N6-succinyllysine. Thr-467 carries the phosphothreonine; by PAK1 modification. Residues Ser-477, Ser-485, and Ser-505 each carry the phosphoserine modification. Position 507 is a phosphothreonine (Thr-507). Phosphoserine occurs at positions 509 and 541.

It belongs to the phosphohexose mutase family. Monomer. Mg(2+) serves as cofactor. Post-translationally, phosphorylation at Thr-467 by PAK1 significantly enhances enzymatic activity.

The protein localises to the cytoplasm. The enzyme catalyses alpha-D-glucose 1-phosphate = alpha-D-glucose 6-phosphate. The catalysed reaction is O-phospho-L-seryl-[protein] + alpha-D-glucose 1-phosphate = alpha-D-glucose 1,6-bisphosphate + L-seryl-[protein]. It carries out the reaction alpha-D-glucose 1,6-bisphosphate + L-seryl-[protein] = O-phospho-L-seryl-[protein] + alpha-D-glucose 6-phosphate. Its activity is regulated as follows. Glucose-1,6-bisphosphate enhances phosphorylation of the active site Ser-117, and thereby increases enzyme activity. Its function is as follows. Catalyzes the reversible isomerization of alpha-D-glucose 1-phosphate to alpha-D-glucose 6-phosphate. The mechanism proceeds via the intermediate compound alpha-D-glucose 1,6-bisphosphate. This enzyme participates in both the breakdown and synthesis of glucose. The chain is Phosphoglucomutase-1 (PGM1) from Homo sapiens (Human).